The sequence spans 294 residues: Transcription termination/antitermination protein NusG (294 aa).

The tract at residues 1–91 (MSDPNLNDAV…EEAEPAAPVD (91 aa)) is disordered. The span at 25 to 39 (DIVEAADSVDPDQAE) shows a compositional bias: acidic residues. Low complexity predominate over residues 40 to 53 (AADLAAGEPAERAA). Residues 59 to 85 (DDSDEDDAAAEEAVEADDESADEEEAE) are compositionally biased toward acidic residues.

Belongs to the NusG family.

Participates in transcription elongation, termination and antitermination. The chain is Transcription termination/antitermination protein NusG from Streptomyces griseus.